A 286-amino-acid polypeptide reads, in one-letter code: Pantothenate synthetase (286 aa).

30 to 37 contacts ATP; that stretch reads MGNLHDGH. The active-site Proton donor is the His-37. Residue Gln-61 coordinates (R)-pantoate. Gln-61 lines the beta-alanine pocket. ATP is bound at residue 149–152; sequence GEKD. Gln-155 is a binding site for (R)-pantoate. ATP contacts are provided by residues Val-178 and 186 to 189; that span reads LSSR.

This sequence belongs to the pantothenate synthetase family. Homodimer.

The protein localises to the cytoplasm. The catalysed reaction is (R)-pantoate + beta-alanine + ATP = (R)-pantothenate + AMP + diphosphate + H(+). The protein operates within cofactor biosynthesis; (R)-pantothenate biosynthesis; (R)-pantothenate from (R)-pantoate and beta-alanine: step 1/1. Catalyzes the condensation of pantoate with beta-alanine in an ATP-dependent reaction via a pantoyl-adenylate intermediate. The protein is Pantothenate synthetase of Edwardsiella ictaluri (strain 93-146).